We begin with the raw amino-acid sequence, 257 residues long: Neurotrophin-3 (257 aa).

Residues 1–18 form the signal peptide; it reads MSILFYMIFLAYLRGIQG. The propeptide occupies 19–138; sequence NSMDQRRLPE…VANRTARRKR (120 aa). The interval 61–81 is disordered; it reads STLPKAEAPREPERGEPAKSE. The span at 67 to 79 shows a compositional bias: basic and acidic residues; that stretch reads EAPREPERGEPAK. Residue asparagine 131 is glycosylated (N-linked (GlcNAc...) asparagine). 3 disulfides stabilise this stretch: cysteine 152–cysteine 217, cysteine 195–cysteine 246, and cysteine 205–cysteine 248.

Belongs to the NGF-beta family.

The protein resides in the secreted. Seems to promote the survival of visceral and proprioceptive sensory neurons. The protein is Neurotrophin-3 (NTF3) of Sus scrofa (Pig).